The chain runs to 68 residues: uncharacterized protein (68 aa).

Residues 1–27 (MKGLLCFIYILSAILIGCVFLNKDVEA) form the signal peptide.

This is an uncharacterized protein from Invertebrate iridescent virus 6 (IIV-6).